The chain runs to 586 residues: Glutamate--tRNA ligase (586 aa).

The 'HIGH' region signature appears at 114-124 (PNPNGPWHVGH). Composition is skewed to basic and acidic residues over residues 431 to 443 (ARGEGPEESHEAV) and 459 to 468 (HPEHPDRGDR). The interval 431-468 (ARGEGPEESHEAVEVPVDDGPDEATPQVHPEHPDRGDR) is disordered.

It belongs to the class-I aminoacyl-tRNA synthetase family. Glutamate--tRNA ligase type 2 subfamily.

Its subcellular location is the cytoplasm. It catalyses the reaction tRNA(Glu) + L-glutamate + ATP = L-glutamyl-tRNA(Glu) + AMP + diphosphate. Functionally, catalyzes the attachment of glutamate to tRNA(Glu) in a two-step reaction: glutamate is first activated by ATP to form Glu-AMP and then transferred to the acceptor end of tRNA(Glu). The chain is Glutamate--tRNA ligase from Halobacterium salinarum (strain ATCC 29341 / DSM 671 / R1).